Consider the following 90-residue polypeptide: Elongation factor 1-beta (90 aa).

The protein belongs to the EF-1-beta/EF-1-delta family.

Its function is as follows. Promotes the exchange of GDP for GTP in EF-1-alpha/GDP, thus allowing the regeneration of EF-1-alpha/GTP that could then be used to form the ternary complex EF-1-alpha/GTP/AAtRNA. The protein is Elongation factor 1-beta of Sulfolobus acidocaldarius (strain ATCC 33909 / DSM 639 / JCM 8929 / NBRC 15157 / NCIMB 11770).